The primary structure comprises 628 residues: tRNA uridine 5-carboxymethylaminomethyl modification enzyme MnmG (628 aa).

FAD is bound by residues 11–16, valine 123, and serine 178; that span reads GAGHAG. 271–285 is a binding site for NAD(+); it reads GPRYCPSIETKIVTF. Glutamine 368 is a binding site for FAD.

The protein belongs to the MnmG family. As to quaternary structure, homodimer. Heterotetramer of two MnmE and two MnmG subunits. FAD is required as a cofactor.

The protein localises to the cytoplasm. In terms of biological role, NAD-binding protein involved in the addition of a carboxymethylaminomethyl (cmnm) group at the wobble position (U34) of certain tRNAs, forming tRNA-cmnm(5)s(2)U34. The sequence is that of tRNA uridine 5-carboxymethylaminomethyl modification enzyme MnmG from Bacteroides thetaiotaomicron (strain ATCC 29148 / DSM 2079 / JCM 5827 / CCUG 10774 / NCTC 10582 / VPI-5482 / E50).